The chain runs to 339 residues: MVREEVAGSTQTLQWKCVESRVDSKRLYYGRFILSPLRKGQADTVGIALRRALLGEIEGTCITRAKFGSXPHEYSTIAGIEESVQEILLNLKEIVLRSNLYGVRDASICVKGPRYITAQDIILPPSVEIVDTXQPIANLTEPIDFCIDLQIKRDRGYQTELRKNYQDGSYPIXXVSMPVRNVNYSIFSCGNGNEKHEILFLEIWTNGSLTPKEALYEASRNLIDLFLPFLHAEEEGTSFEENKNRFTPPLFTFQKRLTNLKKNKKGIPLNCIFIDQLELTSRTYNCLKRANIHTLLDLLSKTEEDLMRIDSFRMEDRKHIWDTLEKHLPIDLLKNKLSF.

Residues 1-233 form an alpha N-terminal domain (alpha-NTD) region; that stretch reads MVREEVAGST…DLFLPFLHAE (233 aa). Residues 264 to 339 form an alpha C-terminal domain (alpha-CTD) region; sequence KKGIPLNCIF…IDLLKNKLSF (76 aa).

It belongs to the RNA polymerase alpha chain family. As to quaternary structure, in plastids the minimal PEP RNA polymerase catalytic core is composed of four subunits: alpha, beta, beta', and beta''. When a (nuclear-encoded) sigma factor is associated with the core the holoenzyme is formed, which can initiate transcription.

It localises to the plastid. The protein localises to the chloroplast. It catalyses the reaction RNA(n) + a ribonucleoside 5'-triphosphate = RNA(n+1) + diphosphate. In terms of biological role, DNA-dependent RNA polymerase catalyzes the transcription of DNA into RNA using the four ribonucleoside triphosphates as substrates. The protein is DNA-directed RNA polymerase subunit alpha of Psathyrostachys stoloniformis.